The following is a 196-amino-acid chain: Probable GTP-binding protein EngB (196 aa).

The region spanning 22 to 196 (NLPEIALAGR…GNWIEDKISQ (175 aa)) is the EngB-type G domain. GTP-binding positions include 30–37 (GRSNVGKS), 57–61 (GKTQT), 75–78 (DVPG), 142–145 (TKMD), and 175–177 (FSS). Mg(2+)-binding residues include S37 and T59.

It belongs to the TRAFAC class TrmE-Era-EngA-EngB-Septin-like GTPase superfamily. EngB GTPase family. Mg(2+) serves as cofactor.

Functionally, necessary for normal cell division and for the maintenance of normal septation. The chain is Probable GTP-binding protein EngB from Lactobacillus acidophilus (strain ATCC 700396 / NCK56 / N2 / NCFM).